The primary structure comprises 226 residues: 7-cyano-7-deazaguanine synthase (226 aa).

10-20 lines the ATP pocket; it reads LSGGLDSATAA. 4 residues coordinate Zn(2+): cysteine 191, cysteine 199, cysteine 202, and cysteine 205.

This sequence belongs to the QueC family. Requires Zn(2+) as cofactor.

The enzyme catalyses 7-carboxy-7-deazaguanine + NH4(+) + ATP = 7-cyano-7-deazaguanine + ADP + phosphate + H2O + H(+). Its pathway is purine metabolism; 7-cyano-7-deazaguanine biosynthesis. In terms of biological role, catalyzes the ATP-dependent conversion of 7-carboxy-7-deazaguanine (CDG) to 7-cyano-7-deazaguanine (preQ(0)). The polypeptide is 7-cyano-7-deazaguanine synthase (Prochlorococcus marinus (strain MIT 9303)).